Consider the following 227-residue polypeptide: Small ribosomal subunit protein uS3 (227 aa).

Residues 39-107 enclose the KH type-2 domain; that stretch reads VREFLDKRLV…PVHINIEEVR (69 aa).

Belongs to the universal ribosomal protein uS3 family. In terms of assembly, part of the 30S ribosomal subunit. Forms a tight complex with proteins S10 and S14.

Functionally, binds the lower part of the 30S subunit head. Binds mRNA in the 70S ribosome, positioning it for translation. The polypeptide is Small ribosomal subunit protein uS3 (Marinobacter nauticus (strain ATCC 700491 / DSM 11845 / VT8) (Marinobacter aquaeolei)).